The primary structure comprises 560 residues: Endogenous retrovirus group K member 18 Env polyprotein (560 aa).

The segment at 355–375 (FIFTLIAVIMGLIAVTATAAV) is fusion peptide. Residues 522–542 (IRSTMIINLILIVVCLFCLLL) traverse the membrane as a helical segment.

This sequence belongs to the beta type-B retroviral envelope protein family. HERV class-II K(HML-2) env subfamily. In terms of assembly, the surface (SU) and transmembrane (TM) proteins form a heterodimer. SU and TM are attached by noncovalent interactions or by a labile interchain disulfide bond. In terms of processing, specific enzymatic cleavages in vivo yield the mature SU and TM proteins. As to expression, expressed at higher level in the thymus. Expressed at lower level in peripheral blood lymphocytes.

It is found in the cell membrane. It localises to the virion. Functionally, retroviral envelope proteins mediate receptor recognition and membrane fusion during early infection. Endogenous envelope proteins may have kept, lost or modified their original function during evolution. This envelope protein has superantigenic properties. In terms of biological role, SU mediates receptor recognition. TM anchors the envelope heterodimer to the viral membrane through one transmembrane domain. The other hydrophobic domain, called fusion peptide, mediates fusion of the viral membrane with the target cell membrane. The protein is Endogenous retrovirus group K member 18 Env polyprotein (ERVK-18) of Homo sapiens (Human).